Reading from the N-terminus, the 624-residue chain is MEIIRSNFKINLHKVYQAIEEADFFAIDGEFSGISDGPSVTALTSGFDTPEERYQKLKKHSMDFLLFQFGLCAFKYDHTDSKHVTKSFNFYVFPKPFSRSSPDVKFVCQSSSIDFLASQGFDFNKVFCSGIPYLNQEEERQLREQFDEKRSQANGAGALAKCPVTIPEDQKKFIDQVIEKIEDFLQSEEKRSLELDPCTGFQRKLIYQTLSWKYPKGIHVETLETDKKERHIVISKVDEEERKRREQEKYTKEQEELNDAVGFSRVIHAIANSGKLVVGHNMLLDVMHTIHQFYCPLPADLNEFKEMAICVFPRLLDTKLMASTQPFKDIINNTSLAELEKRLKETPFDPPKVESAEGFPSYDTASEQLHEAGYDAYITGLCFISMANYLGSLLSPPKMCVSARSKLIEPFFNKLFLMRVMDIPYLNLEGPDLQPKRDHVLHVTFPKEWKTSDLYQLFSAFGNIQISWIDDTSAFVSLSQPEQVQIAVNTSKYAESYRIQTYAEYVGKKQEGKQVKRKWTEDSWKEVDRKRPHMQGPCYHSNSFTAAGVLGKRTLSPDPREAALEDRESEEVSDSELEQTDSCTDPLPEGRKKSKKLKRMKKELSLAGSVSDSPAVLFEVPDTW.

A divalent metal cation contacts are provided by Asp-28 and Glu-30. An R3H domain is found at 171–238 (KKFIDQVIEK…ERHIVISKVD (68 aa)). Residue Lys-213 is modified to N6-acetyllysine. The a divalent metal cation site is built by Asp-285 and Asp-375. Lys-492 carries the post-translational modification N6-acetyllysine. Ser-523 is modified (phosphoserine). At Ser-543 the chain carries Phosphoserine; by MAPKAPK2. The interval 551-612 (GKRTLSPDPR…ELSLAGSVSD (62 aa)) is disordered. Positions 567–579 (RESEEVSDSELEQ) are enriched in acidic residues. Phosphoserine is present on residues Ser-569, Ser-573, and Ser-575. The span at 592-601 (KKSKKLKRMK) shows a compositional bias: basic residues. Residues Ser-605, Ser-609, and Ser-613 each carry the phosphoserine modification.

It belongs to the CAF1 family. Homodimer. Found in a mRNA decay complex with RENT1, RENT2 and RENT3B. Interacts with KHSRP. Interacts with CELF1/CUGBP1. Interacts with ZC3HAV1 in an RNA-independent manner. Interacts with DHX36. Mg(2+) is required as a cofactor. Phosphorylation by MAPKAPK2, preventing GADD45A mRNA degradation after genotoxic stress.

The protein localises to the nucleus. Its subcellular location is the cytoplasm. The protein resides in the nucleolus. The enzyme catalyses Exonucleolytic cleavage of poly(A) to 5'-AMP.. Its function is as follows. 3'-exoribonuclease that has a preference for poly(A) tails of mRNAs, thereby efficiently degrading poly(A) tails. Exonucleolytic degradation of the poly(A) tail is often the first step in the decay of eukaryotic mRNAs and is also used to silence certain maternal mRNAs translationally during oocyte maturation and early embryonic development. Interacts with both the 3'-end poly(A) tail and the 5'-end cap structure during degradation, the interaction with the cap structure being required for an efficient degradation of poly(A) tails. Involved in nonsense-mediated mRNA decay, a critical process of selective degradation of mRNAs that contain premature stop codons. Also involved in degradation of inherently unstable mRNAs that contain AU-rich elements (AREs) in their 3'-UTR, possibly via its interaction with KHSRP. Probably mediates the removal of poly(A) tails of AREs mRNAs, which constitutes the first step of destabilization. Also able to recognize poly(A) tails of microRNAs such as MIR21 and H/ACA box snoRNAs (small nucleolar RNAs) leading to leading to microRNAs degradation or snoRNA increased stability. This chain is Poly(A)-specific ribonuclease PARN (Parn), found in Mus musculus (Mouse).